The sequence spans 719 residues: Penicillin-binding protein 1A (719 aa).

Positions 62–223 (LIADLGSERR…NQYDPYSHPE (162 aa)) are transglycosylase. E91 (proton donor; for transglycosylase activity) is an active-site residue. The transpeptidase stretch occupies residues 297–611 (DVYTNVDQEA…RLTPLVGNGL (315 aa)). Catalysis depends on S370, which acts as the Acyl-ester intermediate; for transpeptidase activity. The disordered stretch occupies residues 652 to 719 (ARSTWSSPAP…QNQNPQPAQP (68 aa)). Low complexity predominate over residues 654–719 (STWSSPAPQQ…QNQNPQPAQP (66 aa)).

This sequence in the N-terminal section; belongs to the glycosyltransferase 51 family. It in the C-terminal section; belongs to the transpeptidase family. Interacts with MreC in the elongasome.

Its subcellular location is the secreted. It catalyses the reaction [GlcNAc-(1-&gt;4)-Mur2Ac(oyl-L-Ala-gamma-D-Glu-L-Lys-D-Ala-D-Ala)](n)-di-trans,octa-cis-undecaprenyl diphosphate + beta-D-GlcNAc-(1-&gt;4)-Mur2Ac(oyl-L-Ala-gamma-D-Glu-L-Lys-D-Ala-D-Ala)-di-trans,octa-cis-undecaprenyl diphosphate = [GlcNAc-(1-&gt;4)-Mur2Ac(oyl-L-Ala-gamma-D-Glu-L-Lys-D-Ala-D-Ala)](n+1)-di-trans,octa-cis-undecaprenyl diphosphate + di-trans,octa-cis-undecaprenyl diphosphate + H(+). The catalysed reaction is Preferential cleavage: (Ac)2-L-Lys-D-Ala-|-D-Ala. Also transpeptidation of peptidyl-alanyl moieties that are N-acyl substituents of D-alanine.. It participates in cell wall biogenesis; peptidoglycan biosynthesis. In terms of biological role, cell wall formation. This chain is Penicillin-binding protein 1A (pbpA), found in Streptococcus pneumoniae (strain ATCC BAA-255 / R6).